Reading from the N-terminus, the 313-residue chain is MKRWVKVWEKFIEEKIREIRETVGDSKAIIALSGGVDSSTAAVLAHRAIGDRLHAVFVNTGFLRKGEPEFVIKTFRDEFGMNLHYVDAQDRFFAALKGVTDPEEKRKIIGRVFIEVFEEVAKDIGAEYLIQGTIAPDWIESQGKIKSHHNVGGLPEKLNLKIIEPLRDLYKDEVRQLAKELGLPEKIYNRMPFPGPGLAVRVIGEVTPEKIRIVREANAIVEEEIEKAGLRPWQAFAVLLGVKTVGVQGDIRAYKETIAVRIVESVDGMTANAMNVPWEVLQRIAFRITSEIPEVGRVLYDITNKPPATIEFE.

The 185-residue stretch at 6–190 (KVWEKFIEEK…LGLPEKIYNR (185 aa)) folds into the GMPS ATP-PPase domain. 33 to 39 (SGGVDSS) lines the ATP pocket.

Heterodimer composed of a glutamine amidotransferase subunit (A) and a GMP-binding subunit (B).

The enzyme catalyses XMP + L-glutamine + ATP + H2O = GMP + L-glutamate + AMP + diphosphate + 2 H(+). The protein operates within purine metabolism; GMP biosynthesis; GMP from XMP (L-Gln route): step 1/1. Its function is as follows. Catalyzes the synthesis of GMP from XMP. In Pyrococcus furiosus (strain ATCC 43587 / DSM 3638 / JCM 8422 / Vc1), this protein is GMP synthase [glutamine-hydrolyzing] subunit B (guaAB).